A 276-amino-acid polypeptide reads, in one-letter code: Digeranylgeranylglyceryl phosphate synthase (276 aa).

Transmembrane regions (helical) follow at residues 14–34, 40–60, 92–112, 146–166, 202–222, 224–244, and 256–276; these read NCIL…GHFP, LLIF…NDYF, FAVG…LGVI, GAVA…AFLV, VGVL…KASV, VGYY…YLIL, and QKLL…AAIV.

This sequence belongs to the UbiA prenyltransferase family. DGGGP synthase subfamily. It depends on Mg(2+) as a cofactor.

It localises to the cell membrane. It catalyses the reaction sn-3-O-(geranylgeranyl)glycerol 1-phosphate + (2E,6E,10E)-geranylgeranyl diphosphate = 2,3-bis-O-(geranylgeranyl)-sn-glycerol 1-phosphate + diphosphate. It participates in membrane lipid metabolism; glycerophospholipid metabolism. Prenyltransferase that catalyzes the transfer of the geranylgeranyl moiety of geranylgeranyl diphosphate (GGPP) to the C2 hydroxyl of (S)-3-O-geranylgeranylglyceryl phosphate (GGGP). This reaction is the second ether-bond-formation step in the biosynthesis of archaeal membrane lipids. This chain is Digeranylgeranylglyceryl phosphate synthase, found in Thermococcus onnurineus (strain NA1).